Consider the following 354-residue polypeptide: Cytoplasmic tRNA 2-thiolation protein 1 (354 aa).

The protein belongs to the TtcA family. CTU1/NCS6/ATPBD3 subfamily.

It is found in the cytoplasm. The protein operates within tRNA modification; 5-methoxycarbonylmethyl-2-thiouridine-tRNA biosynthesis. Functionally, plays a central role in 2-thiolation of mcm(5)S(2)U at tRNA wobble positions of tRNA(Lys), tRNA(Glu) and tRNA(Gln). Directly binds tRNAs and probably acts by catalyzing adenylation of tRNAs, an intermediate required for 2-thiolation. It is unclear whether it acts as a sulfurtransferase that transfers sulfur from thiocarboxylated URM1 onto the uridine of tRNAs at wobble position. Prior mcm(5) tRNA modification by the elongator complex is required for 2-thiolation. May also be involved in protein urmylation. The protein is Cytoplasmic tRNA 2-thiolation protein 1 of Laccaria bicolor (strain S238N-H82 / ATCC MYA-4686) (Bicoloured deceiver).